Reading from the N-terminus, the 491-residue chain is Pyruvate carboxylase subunit A (491 aa).

One can recognise a Biotin carboxylation domain in the interval Met1 to Arg445. Residues Lys116, Glu200, and His235 each coordinate ATP. One can recognise an ATP-grasp domain in the interval Lys120–Ser316. The active site involves Arg291.

Heterooctamer of four A and four B subunits. It depends on Mg(2+) as a cofactor. Mn(2+) serves as cofactor. Co(2+) is required as a cofactor.

The catalysed reaction is hydrogencarbonate + pyruvate + ATP = oxaloacetate + ADP + phosphate + H(+). Its pathway is carbohydrate biosynthesis; gluconeogenesis. Its activity is regulated as follows. Inhibited by ADP and alpha-ketoglutarate. In terms of biological role, pyruvate carboxylase catalyzes a 2-step reaction, involving the ATP-dependent carboxylation of the covalently attached biotin in the first step and the transfer of the carboxyl group to pyruvate in the second. The protein is Pyruvate carboxylase subunit A (pycA) of Methanothermobacter thermautotrophicus (strain ATCC 29096 / DSM 1053 / JCM 10044 / NBRC 100330 / Delta H) (Methanobacterium thermoautotrophicum).